The following is a 287-amino-acid chain: Prepilin leader peptidase/N-methyltransferase (287 aa).

6 helical membrane passes run 10 to 30 (LGFPAAAGLGLLIGSFLNVVI), 101 to 121 (ISIQYPLVELLTSILCVASVW), 125 to 145 (FGWQGFGAIVLSCFLVAMSGI), 177 to 197 (KPALLGAAVGYVSLWTVWWLF), 226 to 246 (ILPIILISSLVGAVLGSIWLF), and 253 to 273 (ATPIPFGPYLAIAGWVVFFWG).

The protein belongs to the peptidase A24 family.

The protein localises to the cell inner membrane. The enzyme catalyses Typically cleaves a -Gly-|-Phe- bond to release an N-terminal, basic peptide of 5-8 residues from type IV prepilin, and then N-methylates the new N-terminal amino group, the methyl donor being S-adenosyl-L-methionine.. In terms of biological role, plays an essential role in type IV pili and type II pseudopili formation by proteolytically removing the leader sequence from substrate proteins and subsequently monomethylating the alpha-amino group of the newly exposed N-terminal phenylalanine. This Xanthomonas campestris pv. campestris (strain ATCC 33913 / DSM 3586 / NCPPB 528 / LMG 568 / P 25) protein is Prepilin leader peptidase/N-methyltransferase (xpsO).